We begin with the raw amino-acid sequence, 698 residues long: Elongation factor G (698 aa).

The tr-type G domain maps to 10–285 (AATRNIGIMA…AVVDFLPSPT (276 aa)). Residues 19–26 (AHIDAGKT), 83–87 (DTPGH), and 137–140 (NKMD) contribute to the GTP site.

The protein belongs to the TRAFAC class translation factor GTPase superfamily. Classic translation factor GTPase family. EF-G/EF-2 subfamily.

It is found in the cytoplasm. Catalyzes the GTP-dependent ribosomal translocation step during translation elongation. During this step, the ribosome changes from the pre-translocational (PRE) to the post-translocational (POST) state as the newly formed A-site-bound peptidyl-tRNA and P-site-bound deacylated tRNA move to the P and E sites, respectively. Catalyzes the coordinated movement of the two tRNA molecules, the mRNA and conformational changes in the ribosome. The chain is Elongation factor G from Parafrankia sp. (strain EAN1pec).